The primary structure comprises 520 residues: CBL-interacting serine/threonine-protein kinase 18 (520 aa).

2 disordered regions span residues 1–29 (MAQA…PHPK) and 48–67 (TDKD…SPRN). Positions 17 to 29 (PDPPPPPPPPHPK) are enriched in pro residues. The span at 55 to 66 (SPQSPRSPRSPR) shows a compositional bias: low complexity. The region spanning 74–328 (YELGKLLGHG…IPEIMKNRWF (255 aa)) is the Protein kinase domain. Residues 80-88 (LGHGTFAKV) and Lys103 each bind ATP. Asp196 serves as the catalytic Proton acceptor. Positions 214-243 (DFGLSAVAEQLRQDGLCHTFCGTPAYIAPE) are activation loop. Position 218 is a phosphoserine (Ser218). Phosphothreonine is present on Thr232. Residues 349 to 368 (EDEEEEASSSGRSSTVSESD) form a disordered region. The segment covering 356 to 366 (SSSGRSSTVSE) has biased composition (low complexity). Residues 382–406 (PRPSSLNAFDIISFSSGFDLSGLFE) enclose the NAF domain. Residues 410–439 (GEGTRFVSGAPVSKIISKLEEIAKIVSFTV) are PPI.

The protein belongs to the protein kinase superfamily. CAMK Ser/Thr protein kinase family. SNF1 subfamily. In terms of assembly, interacts with CBL1 and CBL9. Mn(2+) is required as a cofactor.

It carries out the reaction L-seryl-[protein] + ATP = O-phospho-L-seryl-[protein] + ADP + H(+). The catalysed reaction is L-threonyl-[protein] + ATP = O-phospho-L-threonyl-[protein] + ADP + H(+). In terms of biological role, CIPK serine-threonine protein kinases interact with CBL proteins. Binding of a CBL protein to the regulatory NAF domain of CIPK protein lead to the activation of the kinase in a calcium-dependent manner. The polypeptide is CBL-interacting serine/threonine-protein kinase 18 (CIPK18) (Arabidopsis thaliana (Mouse-ear cress)).